A 194-amino-acid polypeptide reads, in one-letter code: Adapter protein MecA 2 (194 aa).

Belongs to the MecA family. Homodimer.

In terms of biological role, enables the recognition and targeting of unfolded and aggregated proteins to the ClpC protease or to other proteins involved in proteolysis. Also involved in Spx degradation by ClpC. Acts negatively in the development of competence by binding ComK and recruiting it to the ClpCP protease. When overexpressed, inhibits sporulation. This chain is Adapter protein MecA 2 (mecB), found in Bacillus subtilis (strain 168).